The sequence spans 202 residues: Large ribosomal subunit protein bL25 (202 aa).

Belongs to the bacterial ribosomal protein bL25 family. CTC subfamily. Part of the 50S ribosomal subunit; part of the 5S rRNA/L5/L18/L25 subcomplex. Contacts the 5S rRNA. Binds to the 5S rRNA independently of L5 and L18.

This is one of the proteins that binds to the 5S RNA in the ribosome where it forms part of the central protuberance. The polypeptide is Large ribosomal subunit protein bL25 (Chlorobium luteolum (strain DSM 273 / BCRC 81028 / 2530) (Pelodictyon luteolum)).